Consider the following 294-residue polypeptide: MAPALSTSCSSVMAFSTSNALRYHHPQISLRNSLRAPKSPSFVRLPLGKVLQSRIVIRAASSAAGNPQSDADFNPYEVLGVNPIEGFDKIKQTYGRKLKDAQRSGDEATAALLEKAYDKLMYAQLMNRKKGVTFGSFKVSKDIKYADKQPIIPWGPRFSRSSKNDMLINLAISVVFSAWIAIKRNVEYKPLQFMSFVFVYRIFEKLKSFEAPSSPIYNEEGEESGRGLRMGKRLLRSLSLVFGSILLASLAYTGFLNGIEYMGYSIPMVLYNNQELIVTASSAFMLYVIASFYR.

The transit peptide at 1-58 (MAPALSTSCSSVMAFSTSNALRYHHPQISLRNSLRAPKSPSFVRLPLGKVLQSRIVIR) directs the protein to the chloroplast. Residues 59–164 (AASSAAGNPQ…GPRFSRSSKN (106 aa)) lie on the Stromal side of the membrane. Residues 74 to 152 (NPYEVLGVNP…IKYADKQPII (79 aa)) form a J-like domain region. The chain crosses the membrane as a helical span at residues 165–182 (DMLINLAISVVFSAWIAI). The Chloroplast intermembrane segment spans residues 183 to 233 (KRNVEYKPLQFMSFVFVYRIFEKLKSFEAPSSPIYNEEGEESGRGLRMGKR). The chain crosses the membrane as a helical span at residues 234–256 (LLRSLSLVFGSILLASLAYTGFL). Over 257 to 275 (NGIEYMGYSIPMVLYNNQE) the chain is Stromal. The chain crosses the membrane as a helical span at residues 276 to 293 (LIVTASSAFMLYVIASFY). A topological domain (chloroplast intermembrane) is located at residue arginine 294.

In terms of assembly, interacts (via J-like domain) with ARC6 (via J domain).

The protein resides in the plastid. Its subcellular location is the chloroplast inner membrane. Functionally, probably involved in the regulation of the fatty acid metabolic process in chloroplasts, especially chloroplastic galactolipids monogalactosyldiacylglycerol (MGDG) and digalactosyldiacylglycerol (DGDG). This Arabidopsis thaliana (Mouse-ear cress) protein is Protein CHLOROPLAST J-LIKE DOMAIN 1, chloroplastic.